A 504-amino-acid chain; its full sequence is Maturase K (504 aa).

The protein belongs to the intron maturase 2 family. MatK subfamily.

Its subcellular location is the plastid. It localises to the chloroplast. Functionally, usually encoded in the trnK tRNA gene intron. Probably assists in splicing its own and other chloroplast group II introns. The polypeptide is Maturase K (Carpinus betulus (European hornbeam)).